The following is a 467-amino-acid chain: Bifunctional enzyme LpxC/FabZ (467 aa).

A UDP-3-O-acyl-N-acetylglucosamine deacetylase region spans residues 1–306 (MLIHQRTLQN…FVKQLKKYAD (306 aa)). Residues His79, His264, and Asp268 each contribute to the Zn(2+) site. Residue His291 is the Proton donor of the active site. Positions 307 to 467 (RNKLARQYQH…LMATVMEKKN (161 aa)) are 3-hydroxyacyl-[acyl-carrier-protein] dehydratase. His370 is a catalytic residue.

It in the N-terminal section; belongs to the LpxC family. The protein in the C-terminal section; belongs to the thioester dehydratase family. Zn(2+) serves as cofactor.

Its subcellular location is the cytoplasm. It carries out the reaction a UDP-3-O-[(3R)-3-hydroxyacyl]-N-acetyl-alpha-D-glucosamine + H2O = a UDP-3-O-[(3R)-3-hydroxyacyl]-alpha-D-glucosamine + acetate. It catalyses the reaction a (3R)-hydroxyacyl-[ACP] = a (2E)-enoyl-[ACP] + H2O. It participates in glycolipid biosynthesis; lipid IV(A) biosynthesis; lipid IV(A) from (3R)-3-hydroxytetradecanoyl-[acyl-carrier-protein] and UDP-N-acetyl-alpha-D-glucosamine: step 2/6. Its function is as follows. Catalyzes the hydrolysis of UDP-3-O-myristoyl-N-acetylglucosamine to form UDP-3-O-myristoylglucosamine and acetate, the committed step in lipid A biosynthesis. Involved in unsaturated fatty acids biosynthesis. Catalyzes the dehydration of short chain beta-hydroxyacyl-ACPs and long chain saturated and unsaturated beta-hydroxyacyl-ACPs. The chain is Bifunctional enzyme LpxC/FabZ (lpxC/fabZ) from Chlorobaculum tepidum (strain ATCC 49652 / DSM 12025 / NBRC 103806 / TLS) (Chlorobium tepidum).